Here is a 58-residue protein sequence, read N- to C-terminus: NADH dehydrogenase [ubiquinone] 1 beta subcomplex subunit 1 (58 aa).

A helical membrane pass occupies residues 11 to 27 (HWVHVLVPMGFVIGCYL).

Belongs to the complex I NDUFB1 subunit family. Complex I is composed of 45 different subunits.

Its subcellular location is the mitochondrion inner membrane. In terms of biological role, accessory subunit of the mitochondrial membrane respiratory chain NADH dehydrogenase (Complex I) that is believed not to be involved in catalysis. Complex I functions in the transfer of electrons from NADH to the respiratory chain. The immediate electron acceptor for the enzyme is believed to be ubiquinone. The protein is NADH dehydrogenase [ubiquinone] 1 beta subcomplex subunit 1 (NDUFB1) of Homo sapiens (Human).